Consider the following 154-residue polypeptide: Ribosome maturation factor RimP (154 aa).

It belongs to the RimP family.

Its subcellular location is the cytoplasm. Functionally, required for maturation of 30S ribosomal subunits. This chain is Ribosome maturation factor RimP, found in Salmonella agona (strain SL483).